The chain runs to 130 residues: Small ribosomal subunit protein uS9 (130 aa).

The protein belongs to the universal ribosomal protein uS9 family.

In Idiomarina loihiensis (strain ATCC BAA-735 / DSM 15497 / L2-TR), this protein is Small ribosomal subunit protein uS9.